The chain runs to 139 residues: S-adenosylmethionine decarboxylase proenzyme (139 aa).

Residue Ser-63 is the Schiff-base intermediate with substrate; via pyruvic acid of the active site. Ser-63 carries the post-translational modification Pyruvic acid (Ser); by autocatalysis. Catalysis depends on His-68, which acts as the Proton acceptor; for processing activity. The active-site Proton donor; for catalytic activity is Cys-83.

This sequence belongs to the prokaryotic AdoMetDC family. Type 1 subfamily. As to quaternary structure, heterotetramer of two alpha and two beta chains arranged as a dimer of alpha/beta heterodimers. Requires pyruvate as cofactor. Post-translationally, is synthesized initially as an inactive proenzyme. Formation of the active enzyme involves a self-maturation process in which the active site pyruvoyl group is generated from an internal serine residue via an autocatalytic post-translational modification. Two non-identical subunits are generated from the proenzyme in this reaction, and the pyruvate is formed at the N-terminus of the alpha chain, which is derived from the carboxyl end of the proenzyme. The post-translation cleavage follows an unusual pathway, termed non-hydrolytic serinolysis, in which the side chain hydroxyl group of the serine supplies its oxygen atom to form the C-terminus of the beta chain, while the remainder of the serine residue undergoes an oxidative deamination to produce ammonia and the pyruvoyl group blocking the N-terminus of the alpha chain.

The enzyme catalyses S-adenosyl-L-methionine + H(+) = S-adenosyl 3-(methylsulfanyl)propylamine + CO2. It functions in the pathway amine and polyamine biosynthesis; S-adenosylmethioninamine biosynthesis; S-adenosylmethioninamine from S-adenosyl-L-methionine: step 1/1. Functionally, catalyzes the decarboxylation of S-adenosylmethionine to S-adenosylmethioninamine (dcAdoMet), the propylamine donor required for the synthesis of the polyamines spermine and spermidine from the diamine putrescine. The chain is S-adenosylmethionine decarboxylase proenzyme from Pyrococcus horikoshii (strain ATCC 700860 / DSM 12428 / JCM 9974 / NBRC 100139 / OT-3).